Here is a 522-residue protein sequence, read N- to C-terminus: Zinc finger and BTB domain-containing protein 18 (522 aa).

The region spanning 24–91 (CDCTVLVGDA…MYEGKLQFKD (68 aa)) is the BTB domain. Residues 121–143 (ATTEADSTKKEEDASSCSDKVES) are compositionally biased toward basic and acidic residues. The segment at 121–165 (ATTEADSTKKEEDASSCSDKVESLSDGSSHMAGDLPSDEDEGEDE) is disordered. Serine 157 carries the phosphoserine modification. Residue lysine 273 forms a Glycyl lysine isopeptide (Lys-Gly) (interchain with G-Cter in SUMO2) linkage. An interaction with DNMT3A region spans residues 310–427 (EPAHLAPLRE…TFSCMYTLKR (118 aa)). 4 consecutive C2H2-type zinc fingers follow at residues 370–392 (FMCPLCNKVFPSPHILQIHLSTH), 410–432 (PTCSLCGKTFSCMYTLKRHERTH), 438–460 (YTCTQCGKSFQYSHNLSRHAVVH), and 466–489 (HACKWCERRFTQSGDLYRHIRKFH). 2 positions are modified to phosphoserine: serine 516 and serine 517.

This sequence belongs to the krueppel C2H2-type zinc-finger protein family. ZBTB18 subfamily. In terms of assembly, interacts with DNMT3A.

The protein resides in the nucleus. Its function is as follows. Transcriptional repressor that plays a role in various developmental processes such as myogenesis and brain development. Specifically binds the consensus DNA sequence 5'-[AC]ACATCTG[GT][AC]-3' which contains the E box core, and acts by recruiting chromatin remodeling multiprotein complexes. Plays a key role in myogenesis by directly repressing the expression of ID2 and ID3, 2 inhibitors of skeletal myogenesis. Also involved in controlling cell division of progenitor cells and regulating the survival of postmitotic cortical neurons. May also play a role in the organization of chromosomes in the nucleus. The chain is Zinc finger and BTB domain-containing protein 18 (ZBTB18) from Bos taurus (Bovine).